We begin with the raw amino-acid sequence, 498 residues long: Oligopeptide transport system permease protein AmiC (498 aa).

Helical transmembrane passes span 12-32 (SLVS…TLVP), 279-299 (MIVS…ALAV), 316-336 (LSTG…VYIV), 359-379 (SYVL…AIWI), 415-435 (MVPL…GATL), and 461-481 (VVGL…LGDI). The 200-residue stretch at 280 to 479 (IVSSAITGLI…CISIFSRLLG (200 aa)) folds into the ABC transmembrane type-1 domain.

This sequence belongs to the binding-protein-dependent transport system permease family. OppBC subfamily.

The protein resides in the cell membrane. In terms of biological role, part of the binding-protein-dependent transport system for oligopeptides; probably responsible for the translocation of the substrate across the membrane. This chain is Oligopeptide transport system permease protein AmiC (amiC), found in Streptococcus pneumoniae serotype 4 (strain ATCC BAA-334 / TIGR4).